The sequence spans 738 residues: Pentatricopeptide repeat-containing protein At5g65570 (738 aa).

PPR repeat units lie at residues 98 to 128 (AEIS…MSER), 129 to 163 (HIVT…NVLP), 164 to 198 (DEYT…GLEV), 200 to 230 (NVFV…VEEK), 231 to 265 (DVVL…KVQP), 266 to 300 (NEYT…GFES), 301 to 331 (ALAS…IEYP), 332 to 366 (NQVS…SIKP), 367 to 401 (NSFT…GFDR), 402 to 432 (DKYA…LSEV), 433 to 467 (DVIS…GLQP), 468 to 502 (NDVT…KIML), and 503 to 537 (TNDH…DLVL). The tract at residues 537 to 612 (LWRTLLSACK…NPAMSWVEIN (76 aa)) is type E motif. The tract at residues 613-644 (KETHTFMAGDLFSHPNSEQILENLEELIKKSK) is type E(+) motif. The interval 645–738 (DLGYVEDKSC…DGSCSCGDYW (94 aa)) is type DYW motif.

The protein belongs to the PPR family. PCMP-H subfamily.

This is Pentatricopeptide repeat-containing protein At5g65570 (PCMP-H47) from Arabidopsis thaliana (Mouse-ear cress).